Consider the following 300-residue polypeptide: Vetispiradiene synthase 2 (300 aa).

The Mg(2+) site is built by D54, D58, D197, T201, and E205. Positions 54-58 match the DDXXD motif motif; it reads DDTFD.

Belongs to the terpene synthase family. Tpsa subfamily. Mg(2+) is required as a cofactor.

Its subcellular location is the cytoplasm. It carries out the reaction (2E,6E)-farnesyl diphosphate = (-)-vetispiradiene + diphosphate. It participates in secondary metabolite biosynthesis; terpenoid biosynthesis. Functionally, sesquiterpene synthase that catalyzes the formation of vetispiradiene from trans,trans-farnesyl diphosphate. The initial internal cyclization produces the monocyclic intermediate germacrene A. This is Vetispiradiene synthase 2 from Hyoscyamus muticus (Egyptian henbane).